Here is a 271-residue protein sequence, read N- to C-terminus: Putative hydro-lyase jk0403 (271 aa).

Belongs to the D-glutamate cyclase family.

This is Putative hydro-lyase jk0403 from Corynebacterium jeikeium (strain K411).